A 162-amino-acid chain; its full sequence is Probable chemoreceptor glutamine deamidase CheD (162 aa).

Belongs to the CheD family.

The catalysed reaction is L-glutaminyl-[protein] + H2O = L-glutamyl-[protein] + NH4(+). In terms of biological role, probably deamidates glutamine residues to glutamate on methyl-accepting chemotaxis receptors (MCPs), playing an important role in chemotaxis. The chain is Probable chemoreceptor glutamine deamidase CheD from Clostridium kluyveri (strain ATCC 8527 / DSM 555 / NBRC 12016 / NCIMB 10680 / K1).